Consider the following 237-residue polypeptide: Demethylmenaquinone methyltransferase (237 aa).

Residues T58, D79, and 106–107 (NA) each bind S-adenosyl-L-methionine.

Belongs to the class I-like SAM-binding methyltransferase superfamily. MenG/UbiE family.

It catalyses the reaction a 2-demethylmenaquinol + S-adenosyl-L-methionine = a menaquinol + S-adenosyl-L-homocysteine + H(+). Its pathway is quinol/quinone metabolism; menaquinone biosynthesis; menaquinol from 1,4-dihydroxy-2-naphthoate: step 2/2. Its function is as follows. Methyltransferase required for the conversion of demethylmenaquinol (DMKH2) to menaquinol (MKH2). The protein is Demethylmenaquinone methyltransferase of Bacillus cereus (strain ATCC 10987 / NRS 248).